Consider the following 83-residue polypeptide: MSSGGLLLLLGLLTLWEGLTPVSSKDRPDFCELPDDRGPCRGIFHAFYYNPDQRQCLEFIYGGCYGNANNFKTIDECKRTCAA.

Positions 1 to 24 are cleaved as a signal peptide; it reads MSSGGLLLLLGLLTLWEGLTPVSS. Residues 31–81 form the BPTI/Kunitz inhibitor domain; sequence CELPDDRGPCRGIFHAFYYNPDQRQCLEFIYGGCYGNANNFKTIDECKRTC. 3 cysteine pairs are disulfide-bonded: cysteine 31–cysteine 81, cysteine 40–cysteine 64, and cysteine 56–cysteine 77.

Belongs to the venom Kunitz-type family. As to expression, expressed by the venom gland.

It is found in the secreted. Functionally, serine protease inhibitor. In Pseudechis porphyriacus (Red-bellied black snake), this protein is Kunitz-type serine protease inhibitor blackelin-2.